A 602-amino-acid polypeptide reads, in one-letter code: VIN3-like protein 1 (602 aa).

Residues 1-38 (MDSSSTKSKISHSRKTNKKSNKKHESNGKQQQQQDVDG) are disordered. Positions 9–22 (KISHSRKTNKKSNK) are enriched in basic residues. The segment at 67-137 (RCSCCVCHNF…CFCCYSCGKV (71 aa)) adopts a PHD-type zinc-finger fold. The Nuclear localization signal motif lies at 144–151 (WKKQLVAA). A Fibronectin type-III domain is found at 242–340 (VPAACRFHFE…AMCFTKSVEI (99 aa)). Residues 430–470 (LNEEFTPPDSSGGEDNGVPLNSLAEADGGDHDDNCDDAVSN) form a disordered region. Positions 502 to 602 (AISDSNDSEN…RPNNGVMTSH (101 aa)) are VIN3-Interacting Domain (VID).

In terms of assembly, interacts with VIN3 and VIL2. The heterodimer made of VIN3 and VIL1 is required for establishing the vernalization-induced epigenetic silencing of FLC. Component of the plant homeodomain / polycomb repressive complex 2 (PHD-PRC2) large complex during prolonged cold, composed of core PRC2 components (VRN2, EZA1, FIE and MSI1), and three related PHD finger proteins (VIL1, VIL2 and VIN3) that mediates histone H3 trimethylation on 'Lys-27' (H3K27me3). Accumulates in shoot and root apices, and in leaves.

The protein localises to the nucleus. It localises to the nucleus speckle. Involved in both the vernalization and photoperiod pathways by regulating expression of the related floral repressors FLOWERING LOCUS C (FLC) and FLOWERING LOCUS M (FLM). Together with VIN3, required during vernalization for the modifications of FLC and FLM chromatin that are associated with an epigenetically silenced state (e.g. chromatin modifications, histone deacetylation, and trimethylated H3 'Lys-4' H3K4me3 and 'Lys-27' H3K27me3) and with acquisition of competence to flower. Promotes flowering in short days (SD=8 hours light/16 hours dark). Associates dynamically at FLC locus; during vernalization, binds to specific sites, but when in warm conditions, distributed along the whole locus. This is VIN3-like protein 1 (VIL1) from Arabidopsis thaliana (Mouse-ear cress).